The sequence spans 383 residues: ATP phosphoribosyltransferase regulatory subunit (383 aa).

The protein belongs to the class-II aminoacyl-tRNA synthetase family. HisZ subfamily. In terms of assembly, heteromultimer composed of HisG and HisZ subunits.

The protein resides in the cytoplasm. It functions in the pathway amino-acid biosynthesis; L-histidine biosynthesis; L-histidine from 5-phospho-alpha-D-ribose 1-diphosphate: step 1/9. Its function is as follows. Required for the first step of histidine biosynthesis. May allow the feedback regulation of ATP phosphoribosyltransferase activity by histidine. The polypeptide is ATP phosphoribosyltransferase regulatory subunit (Desulfitobacterium hafniense (strain Y51)).